A 418-amino-acid chain; its full sequence is GTPase Obg (418 aa).

The 156-residue stretch at 1-156 (MKFIDEITLN…KKLTLVLKVL (156 aa)) folds into the Obg domain. One can recognise an OBG-type G domain in the interval 157–324 (ADVGFVGKPS…LKEALWQSVK (168 aa)). GTP contacts are provided by residues 163-170 (GKPSAGKS), 188-192 (FTTLV), 209-212 (DLPG), 278-281 (NKKD), and 305-307 (SAL). Mg(2+)-binding residues include Ser-170 and Thr-190. The OCT domain occupies 339 to 417 (VFINFEADFN…IYDYEFVWGN (79 aa)).

Belongs to the TRAFAC class OBG-HflX-like GTPase superfamily. OBG GTPase family. As to quaternary structure, monomer. It depends on Mg(2+) as a cofactor.

It is found in the cytoplasm. Functionally, an essential GTPase which binds GTP, GDP and possibly (p)ppGpp with moderate affinity, with high nucleotide exchange rates and a fairly low GTP hydrolysis rate. Plays a role in control of the cell cycle, stress response, ribosome biogenesis and in those bacteria that undergo differentiation, in morphogenesis control. The polypeptide is GTPase Obg (Mycoplasmopsis pulmonis (strain UAB CTIP) (Mycoplasma pulmonis)).